Here is a 133-residue protein sequence, read N- to C-terminus: ATP synthase epsilon chain (133 aa).

It belongs to the ATPase epsilon chain family. In terms of assembly, F-type ATPases have 2 components, CF(1) - the catalytic core - and CF(0) - the membrane proton channel. CF(1) has five subunits: alpha(3), beta(3), gamma(1), delta(1), epsilon(1). CF(0) has three main subunits: a, b and c.

Its subcellular location is the cell membrane. Produces ATP from ADP in the presence of a proton gradient across the membrane. The polypeptide is ATP synthase epsilon chain (Clostridium perfringens (strain ATCC 13124 / DSM 756 / JCM 1290 / NCIMB 6125 / NCTC 8237 / Type A)).